We begin with the raw amino-acid sequence, 134 residues long: Putative pre-16S rRNA nuclease (134 aa).

Belongs to the YqgF nuclease family.

It localises to the cytoplasm. Could be a nuclease involved in processing of the 5'-end of pre-16S rRNA. This is Putative pre-16S rRNA nuclease from Helicobacter pylori (strain HPAG1).